A 123-amino-acid chain; its full sequence is Protein Wnt-7b (123 aa).

Serine 1 carries the O-palmitoleoyl serine; by PORCN lipid modification. Positions 33–61 are disordered linker; that stretch reads VEVVRASRLRQPTFLKIKQIKSYQKPMET. The cysteines at positions 89 and 104 are disulfide-linked. An N-linked (GlcNAc...) asparagine glycan is attached at asparagine 90.

The protein belongs to the Wnt family. Post-translationally, palmitoleoylation is required for efficient binding to frizzled receptors. Depalmitoleoylation leads to Wnt signaling pathway inhibition.

It localises to the secreted. It is found in the extracellular space. The protein localises to the extracellular matrix. In terms of biological role, ligand for members of the frizzled family of seven transmembrane receptors that functions in the canonical Wnt/beta-catenin signaling pathway. Required for normal fusion of the chorion and the allantois during placenta development. Required for central nervous system (CNS) angiogenesis and blood-brain barrier regulation. The protein is Protein Wnt-7b (WNT7B) of Anser caerulescens (Snow goose).